A 519-amino-acid polypeptide reads, in one-letter code: MISAAVEPHVDAFKPDNREPLTPDFATTGKAPGAQRQHNPNKRKILFVTSEIADLVKTGGLGDVSAALPRALAHLHDVRVLIPGYRQVMESDNPIHIVGELGGHAALPPCKIGRMDMADGLVIYVLICPELYQRDGTPYGANNGRDWPDNHIRFARLGLAAAEIAAGEGKIHWTPEVVHAHDWPAGLAPAYMHWRGLNTPTLFTIHNLAYQGVYSRGCSPELAIPEHAMQQEGMEFYGKLSFLKAGLAYSSHITTVSATYAREITTPEFGCGLDGFLASKAQQGLLGGIPNGIDESWDSATDKHLQHNFSINDWEGKARNTQEVRELFGLDDSEGPLFAVVSRLVYQKGLDLTLGVADYIVEQGGQIAIIGRGEPEEEQAMRELALRHPGRIGVRIGFNETDARRMFAGSDFLLMPSRYEPCGLSQMYAQRFGSLPVARNTGGLADTIECGVTGFLFNESTVESYREALSRAFYVYGKKDLLNAMRCLSMTQPFNWCQAVEPYARLYEDLVKQTQLSHY.

The segment at 1–40 is disordered; the sequence is MISAAVEPHVDAFKPDNREPLTPDFATTGKAPGAQRQHNP. Basic and acidic residues predominate over residues 8 to 21; the sequence is PHVDAFKPDNREPL. ADP-alpha-D-glucose is bound at residue Lys57.

Belongs to the glycosyltransferase 1 family. Bacterial/plant glycogen synthase subfamily.

The enzyme catalyses [(1-&gt;4)-alpha-D-glucosyl](n) + ADP-alpha-D-glucose = [(1-&gt;4)-alpha-D-glucosyl](n+1) + ADP + H(+). The protein operates within glycan biosynthesis; glycogen biosynthesis. Synthesizes alpha-1,4-glucan chains using ADP-glucose. In Pseudomonas putida (strain ATCC 47054 / DSM 6125 / CFBP 8728 / NCIMB 11950 / KT2440), this protein is Glycogen synthase.